The chain runs to 80 residues: Translation initiation factor IF-1 (80 aa).

Residues 6–80 (RKQEHEKERG…LTRGRIVYRL (75 aa)) enclose the S1-like domain.

The protein belongs to the IF-1 family. As to quaternary structure, component of the 30S ribosomal translation pre-initiation complex which assembles on the 30S ribosome in the order IF-2 and IF-3, IF-1 and N-formylmethionyl-tRNA(fMet); mRNA recruitment can occur at any time during PIC assembly.

It localises to the cytoplasm. Its function is as follows. One of the essential components for the initiation of protein synthesis. Stabilizes the binding of IF-2 and IF-3 on the 30S subunit to which N-formylmethionyl-tRNA(fMet) subsequently binds. Helps modulate mRNA selection, yielding the 30S pre-initiation complex (PIC). Upon addition of the 50S ribosomal subunit IF-1, IF-2 and IF-3 are released leaving the mature 70S translation initiation complex. The chain is Translation initiation factor IF-1 from Aquifex aeolicus (strain VF5).